The following is a 92-amino-acid chain: Small ribosomal subunit protein bS20 (92 aa).

The tract at residues 1-23 is disordered; it reads MANTTSAKKATRKIARRTDVNKA.

This sequence belongs to the bacterial ribosomal protein bS20 family.

Functionally, binds directly to 16S ribosomal RNA. In Rhizobium leguminosarum bv. trifolii (strain WSM2304), this protein is Small ribosomal subunit protein bS20.